The primary structure comprises 72 residues: NAD(P)H-quinone oxidoreductase subunit O (72 aa).

The protein belongs to the complex I NdhO subunit family. As to quaternary structure, NDH-1 can be composed of about 15 different subunits; different subcomplexes with different compositions have been identified which probably have different functions.

The protein localises to the cellular thylakoid membrane. The enzyme catalyses a plastoquinone + NADH + (n+1) H(+)(in) = a plastoquinol + NAD(+) + n H(+)(out). It carries out the reaction a plastoquinone + NADPH + (n+1) H(+)(in) = a plastoquinol + NADP(+) + n H(+)(out). In terms of biological role, NDH-1 shuttles electrons from an unknown electron donor, via FMN and iron-sulfur (Fe-S) centers, to quinones in the respiratory and/or the photosynthetic chain. The immediate electron acceptor for the enzyme in this species is believed to be plastoquinone. Couples the redox reaction to proton translocation, and thus conserves the redox energy in a proton gradient. Cyanobacterial NDH-1 also plays a role in inorganic carbon-concentration. In Crocosphaera subtropica (strain ATCC 51142 / BH68) (Cyanothece sp. (strain ATCC 51142)), this protein is NAD(P)H-quinone oxidoreductase subunit O.